The chain runs to 92 residues: Large ribosomal subunit protein eL42 (92 aa).

Residues Cys11, Cys14, Cys70, and Cys73 each coordinate Zn(2+). A C4-type zinc finger spans residues 11–73; sequence CPNCRKHTVH…LDLRLKCKEC (63 aa).

It belongs to the eukaryotic ribosomal protein eL42 family. As to quaternary structure, part of the 50S ribosomal subunit. Zn(2+) is required as a cofactor.

Functionally, binds to the 23S rRNA. The chain is Large ribosomal subunit protein eL42 from Methanothermobacter thermautotrophicus (strain ATCC 29096 / DSM 1053 / JCM 10044 / NBRC 100330 / Delta H) (Methanobacterium thermoautotrophicum).